A 441-amino-acid chain; its full sequence is pH-response regulator protein palC (441 aa).

A BRO1 domain is found at 3–352; the sequence is ISYTGQLPTT…GAAYAAILQL (350 aa). Disordered stretches follow at residues 278 to 304 and 414 to 441; these read RKDD…TSSG and KWTP…GSYY.

Belongs to the palC family.

Required for the proteolytic cleavage of the transcription factor RIM101 in response to alkaline ambient pH. This is pH-response regulator protein palC from Yarrowia lipolytica (strain CLIB 122 / E 150) (Yeast).